The following is a 201-amino-acid chain: 3-mercaptopropionate dioxygenase (201 aa).

Residues H89, H91, and H142 each contribute to the Fe cation site.

Belongs to the cysteine dioxygenase family. As to quaternary structure, forms homodimer in the crystal; however, there is no evidence that the dimer exists under physiological conditions or has biological significance. The cofactor is Fe(2+).

It catalyses the reaction 3-sulfanylpropanoate + O2 = 3-sulfinopropanoate + H(+). In terms of biological role, thiol dioxygenase that catalyzes the dioxygenation of 3-mercaptopropionate (3-MPA) to 3-sulfinopropionate (3-SPA). To a lesser extent (40-fold lower efficiency), is also able to oxidize cysteine to cysteine sulfinate (CSA). Cannot use N-acetyl-L-cysteine, homocysteine, and cysteamine as substrates. The physiological role of this enzyme is unclear. The sequence is that of 3-mercaptopropionate dioxygenase from Pseudomonas aeruginosa (strain ATCC 15692 / DSM 22644 / CIP 104116 / JCM 14847 / LMG 12228 / 1C / PRS 101 / PAO1).